Reading from the N-terminus, the 366-residue chain is Rab9 effector protein with kelch motifs (366 aa).

Kelch repeat units lie at residues 49–95, 100–146, 151–200, 204–253, 254–303, and 343–366; these read KILI…FISA, NIWV…TSSA, KLYV…VLTA, KLFV…AWKS, YIYI…LLPW, and LCFI…TILQ.

Its function is as follows. Rab9 effector required for endosome to trans-Golgi network (TGN) transport. This Xenopus laevis (African clawed frog) protein is Rab9 effector protein with kelch motifs (rabepk).